Here is a 188-residue protein sequence, read N- to C-terminus: Elongation factor P 1 (188 aa).

The protein belongs to the elongation factor P family.

It is found in the cytoplasm. It functions in the pathway protein biosynthesis; polypeptide chain elongation. Its function is as follows. Involved in peptide bond synthesis. Stimulates efficient translation and peptide-bond synthesis on native or reconstituted 70S ribosomes in vitro. Probably functions indirectly by altering the affinity of the ribosome for aminoacyl-tRNA, thus increasing their reactivity as acceptors for peptidyl transferase. This Mesorhizobium japonicum (strain LMG 29417 / CECT 9101 / MAFF 303099) (Mesorhizobium loti (strain MAFF 303099)) protein is Elongation factor P 1.